The sequence spans 302 residues: N(G),N(G)-dimethylarginine dimethylaminohydrolase (302 aa).

3 residues coordinate substrate: Asp102, Arg127, and Arg172. His201 serves as the catalytic Proton donor. The active-site Nucleophile is the Cys295.

It belongs to the DDAH family.

The catalysed reaction is N(omega),N(omega)-dimethyl-L-arginine + H2O = dimethylamine + L-citrulline. It carries out the reaction N(omega)-methyl-L-arginine + H2O = L-citrulline + methylamine. Its function is as follows. Hydrolyzes N(G),N(G)-dimethyl-L-arginine (ADMA) and N(G)-monomethyl-L-arginine (MMA). This chain is N(G),N(G)-dimethylarginine dimethylaminohydrolase, found in Mycobacterium tuberculosis (strain ATCC 25618 / H37Rv).